The following is a 405-amino-acid chain: Argininosuccinate synthase (405 aa).

An ATP-binding site is contributed by 8–16 (AYSGGLDTS). Residues Tyr86 and Ser91 each coordinate L-citrulline. An ATP-binding site is contributed by Gly116. Residues Thr118, Asn122, and Asp123 each coordinate L-aspartate. Position 122 (Asn122) interacts with L-citrulline. L-citrulline contacts are provided by Arg126, Ser175, Ser184, Glu260, and Tyr272.

Belongs to the argininosuccinate synthase family. Type 1 subfamily. As to quaternary structure, homotetramer.

The protein resides in the cytoplasm. It catalyses the reaction L-citrulline + L-aspartate + ATP = 2-(N(omega)-L-arginino)succinate + AMP + diphosphate + H(+). It functions in the pathway amino-acid biosynthesis; L-arginine biosynthesis; L-arginine from L-ornithine and carbamoyl phosphate: step 2/3. This chain is Argininosuccinate synthase, found in Koribacter versatilis (strain Ellin345).